The sequence spans 187 residues: MPVDLSKWSGPLSLQEVDEQPQHPLHVTYAGAALDELGKVLTPTQVKNRPTSISWDGLDSGKLYTLVLTDPDAPSRKDPKYREWHHFLVVNMKGNDISSGTVLSDYVGSGPPKGTGLHRYVWLVYEQARPLKCDEPILSNRSGDHRGKFKVASFRKKYELGAPVAGACYQAEWDDYVPKLYEQLSGK.

2 positions are modified to phosphoserine: Ser6 and Ser13. Position 42 is a phosphothreonine (Thr42). Phosphoserine is present on residues Ser52, Ser54, Ser98, and Ser153. Residues 93–134 (KGNDISSGTVLSDYVGSGPPKGTGLHRYVWLVYEQARPLKCD) form an interaction with RAF1 region.

It belongs to the phosphatidylethanolamine-binding protein family. Has a tendency to form dimers by disulfide cross-linking. Interacts with RAF1 and this interaction is enhanced if RAF1 is phosphorylated on residues 'Ser-338', 'Ser-339', 'Tyr-340' and 'Tyr-341'. Interacts with ALOX15; in response to IL13/interleukin-13, prevents the interaction of PEBP1 with RAF1 to activate the ERK signaling cascade.

The protein resides in the cytoplasm. Its function is as follows. Binds ATP, opioids and phosphatidylethanolamine. Has lower affinity for phosphatidylinositol and phosphatidylcholine. Serine protease inhibitor which inhibits thrombin, neuropsin and chymotrypsin but not trypsin, tissue type plasminogen activator and elastase. Inhibits the kinase activity of RAF1 by inhibiting its activation and by dissociating the RAF1/MEK complex and acting as a competitive inhibitor of MEK phosphorylation. In terms of biological role, HCNP may be involved in the function of the presynaptic cholinergic neurons of the central nervous system. HCNP increases the production of choline acetyltransferase but not acetylcholinesterase. Seems to be mediated by a specific receptor. The chain is Phosphatidylethanolamine-binding protein 1 (PEBP1) from Macaca fascicularis (Crab-eating macaque).